Consider the following 180-residue polypeptide: Large ribosomal subunit protein uL5 (180 aa).

It belongs to the universal ribosomal protein uL5 family. In terms of assembly, part of the 50S ribosomal subunit; part of the 5S rRNA/L5/L18/L25 subcomplex. Contacts the 5S rRNA and the P site tRNA. Forms a bridge to the 30S subunit in the 70S ribosome.

This is one of the proteins that bind and probably mediate the attachment of the 5S RNA into the large ribosomal subunit, where it forms part of the central protuberance. In the 70S ribosome it contacts protein S13 of the 30S subunit (bridge B1b), connecting the 2 subunits; this bridge is implicated in subunit movement. Contacts the P site tRNA; the 5S rRNA and some of its associated proteins might help stabilize positioning of ribosome-bound tRNAs. In Streptococcus sanguinis (strain SK36), this protein is Large ribosomal subunit protein uL5.